Reading from the N-terminus, the 252-residue chain is Probable transcriptional regulatory protein TW504 (252 aa).

Belongs to the TACO1 family.

It localises to the cytoplasm. The polypeptide is Probable transcriptional regulatory protein TW504 (Tropheryma whipplei (strain TW08/27) (Whipple's bacillus)).